The chain runs to 582 residues: Transcription factor tau subunit sfc6 (582 aa).

Positions 1–97 (MGPKSKEYEN…SAKKQSSKGL (97 aa)) are disordered. Residues 18 to 39 (EDNDDDGDFVLENVMSEEDIEI) are compositionally biased toward acidic residues. The span at 63-87 (QPLTPSSSKGAGNEPKSQNSSTTRG) shows a compositional bias: polar residues. WD repeat units follow at residues 221–262 (TQFL…NFKS), 268–314 (HDWG…VKFH), and 326–369 (FNDS…ECPL).

In terms of assembly, component of the TFIIIC complex including sfc1, sfc3, sfc4, sfc6 and sfc7. The subunits are organized in two globular domains, tauA and tauB, connected by a proteolysis-sensitive and flexible linker. Interacts with sfc1, sfc3 and sfc4.

Its subcellular location is the nucleus. In terms of biological role, TFIIIC mediates tRNA and 5S RNA gene activation by binding to intragenic promoter elements. Upstream of the transcription start site, TFIIIC assembles the initiation complex TFIIIB-TFIIIC-tDNA, which is sufficient for RNA polymerase III recruitment and function. Part of the tauB domain of TFIIIC that binds boxB DNA promoter sites of tRNA and similar genes. Cooperates with sfc3 in DNA binding. Localizes to chromatin insulator sequence without recruiting RNA polymerase III and plays a role in nuclear organization. The protein is Transcription factor tau subunit sfc6 of Schizosaccharomyces pombe (strain 972 / ATCC 24843) (Fission yeast).